The chain runs to 186 residues: dCTP deaminase (186 aa).

Residue 107–112 participates in dCTP binding; sequence KSTYAR. The active-site Proton donor/acceptor is E133. Q152, Y166, and Q176 together coordinate dCTP.

This sequence belongs to the dCTP deaminase family. Homotrimer.

The enzyme catalyses dCTP + H2O + H(+) = dUTP + NH4(+). It participates in pyrimidine metabolism; dUMP biosynthesis; dUMP from dCTP (dUTP route): step 1/2. Functionally, catalyzes the deamination of dCTP to dUTP. The polypeptide is dCTP deaminase (Campylobacter jejuni subsp. doylei (strain ATCC BAA-1458 / RM4099 / 269.97)).